The chain runs to 210 residues: Ribonuclease HII (210 aa).

An RNase H type-2 domain is found at 18–207 (RFVAGVDEVG…VHKILCKEET (190 aa)). Residues Asp24, Glu25, and Asp115 each coordinate a divalent metal cation.

The protein belongs to the RNase HII family. It depends on Mn(2+) as a cofactor. The cofactor is Mg(2+).

It localises to the cytoplasm. It catalyses the reaction Endonucleolytic cleavage to 5'-phosphomonoester.. Its function is as follows. Endonuclease that specifically degrades the RNA of RNA-DNA hybrids. The polypeptide is Ribonuclease HII (Paracoccus denitrificans (strain Pd 1222)).